A 266-amino-acid polypeptide reads, in one-letter code: Small ribosomal subunit protein eS1 (266 aa).

Residues 236–266 are disordered; the sequence is GAGTAAKATGDDTGAKVERADGYEPPIQESV. Residues 244–257 are compositionally biased toward basic and acidic residues; sequence TGDDTGAKVERADG.

This sequence belongs to the eukaryotic ribosomal protein eS1 family. As to quaternary structure, component of the small ribosomal subunit. Mature ribosomes consist of a small (40S) and a large (60S) subunit. The 40S subunit contains about 33 different proteins and 1 molecule of RNA (18S). The 60S subunit contains about 49 different proteins and 3 molecules of RNA (28S, 5.8S and 5S). Part of the small subunit (SSU) processome, composed of more than 70 proteins and the RNA chaperone small nucleolar RNA (snoRNA) U3.

Its subcellular location is the cytoplasm. The protein resides in the nucleus. The protein localises to the nucleolus. Component of the small ribosomal subunit. The ribosome is a large ribonucleoprotein complex responsible for the synthesis of proteins in the cell. Part of the small subunit (SSU) processome, first precursor of the small eukaryotic ribosomal subunit. During the assembly of the SSU processome in the nucleolus, many ribosome biogenesis factors, an RNA chaperone and ribosomal proteins associate with the nascent pre-rRNA and work in concert to generate RNA folding, modifications, rearrangements and cleavage as well as targeted degradation of pre-ribosomal RNA by the RNA exosome. May play a role during erythropoiesis. The polypeptide is Small ribosomal subunit protein eS1 (rps3a) (Tetraodon nigroviridis (Spotted green pufferfish)).